Reading from the N-terminus, the 341-residue chain is Dimethylsulfoniopropionate lyase 7 (341 aa).

Basic and acidic residues-rich tracts occupy residues 1 to 10 (MAGKDRKTIE) and 319 to 328 (ERKLAKDRQK). Disordered regions lie at residues 1–24 (MAGK…GGRF) and 319–341 (ERKL…AFDA).

This sequence belongs to the aspartate/glutamate racemases family. ALMA1 subfamily. Homotetramer.

It carries out the reaction S,S-dimethyl-beta-propiothetin = acrylate + dimethyl sulfide + H(+). Its function is as follows. Mediates cleavage of dimethylsulfoniopropionate (DMSP) into dimethyl sulfide (DMS) and acrylate. DMS is the principal form by which sulfur is transported from oceans to the atmosphere and is a key component of the ocean sulfur cycle. The protein is Dimethylsulfoniopropionate lyase 7 of Emiliania huxleyi (strain CCMP1516).